We begin with the raw amino-acid sequence, 475 residues long: MRFQPVIGLEVHVQLKTDSKIFCGCSTRFGAEPNLNTCPVCLALPGALPVLNQKVVEFAIMAGLATNCSISPTNIFARKNYFYPDLPKGYQISQFDLPICLAGHLDIAVGDQTKRIGITRIHMEEDAGKLVHGQGGGSGVDLNRAGTPLLEVVSEPDMRTADEAVAYLKKLYQIVTYLGICDGNMEEGSFRCDANVSVMPVGSGTFGTRAEIKNVNSFKFVKAAIEYEIARQCELIEDGGKVVQETRLFDPNKGVTRSMRGKEEAHDYRYFPDPDLVPVVISDDWIKRVKNELPELPEVKFNRFLTEYSLPEYDADVLTSSRPLADYFEQCAQTCNNAKAAANWVMGELTRSLNDNGIAIEDSPVSPAQLAGLIKLIDGGTISGTIAKKVFEDLWKNGGEAAAIVEQQGLAQVSDTGAIETAIDQIMAANMGQVEEYRGGKDKVFGFFVGQVMKAMKGKANPAVVNDLLKQKLAG.

The protein belongs to the GatB/GatE family. GatB subfamily. As to quaternary structure, heterotrimer of A, B and C subunits.

It carries out the reaction L-glutamyl-tRNA(Gln) + L-glutamine + ATP + H2O = L-glutaminyl-tRNA(Gln) + L-glutamate + ADP + phosphate + H(+). The enzyme catalyses L-aspartyl-tRNA(Asn) + L-glutamine + ATP + H2O = L-asparaginyl-tRNA(Asn) + L-glutamate + ADP + phosphate + 2 H(+). Functionally, allows the formation of correctly charged Asn-tRNA(Asn) or Gln-tRNA(Gln) through the transamidation of misacylated Asp-tRNA(Asn) or Glu-tRNA(Gln) in organisms which lack either or both of asparaginyl-tRNA or glutaminyl-tRNA synthetases. The reaction takes place in the presence of glutamine and ATP through an activated phospho-Asp-tRNA(Asn) or phospho-Glu-tRNA(Gln). The chain is Aspartyl/glutamyl-tRNA(Asn/Gln) amidotransferase subunit B from Trichlorobacter lovleyi (strain ATCC BAA-1151 / DSM 17278 / SZ) (Geobacter lovleyi).